We begin with the raw amino-acid sequence, 167 residues long: Lipoprotein signal peptidase (167 aa).

The next 3 helical transmembrane spans lie at 12–32 (WLWLAVLAFVLDQASKLAVVK), 68–88 (WQRWFFAVLAFAICGLLIHWL), and 99–119 (GIAYSLIIGGALGNVFDRLVL). Residues aspartate 124 and aspartate 142 contribute to the active site. Residues 137–157 (AFNLADSFIFIGAAMIVLDGF) traverse the membrane as a helical segment.

This sequence belongs to the peptidase A8 family.

The protein resides in the cell inner membrane. It carries out the reaction Release of signal peptides from bacterial membrane prolipoproteins. Hydrolyzes -Xaa-Yaa-Zaa-|-(S,diacylglyceryl)Cys-, in which Xaa is hydrophobic (preferably Leu), and Yaa (Ala or Ser) and Zaa (Gly or Ala) have small, neutral side chains.. Its pathway is protein modification; lipoprotein biosynthesis (signal peptide cleavage). This protein specifically catalyzes the removal of signal peptides from prolipoproteins. This is Lipoprotein signal peptidase from Aeromonas hydrophila subsp. hydrophila (strain ATCC 7966 / DSM 30187 / BCRC 13018 / CCUG 14551 / JCM 1027 / KCTC 2358 / NCIMB 9240 / NCTC 8049).